A 387-amino-acid chain; its full sequence is 3-ketoacyl-CoA thiolase (387 aa).

Cys91 acts as the Acyl-thioester intermediate in catalysis. Active-site proton acceptor residues include His343 and Cys373.

This sequence belongs to the thiolase-like superfamily. Thiolase family. As to quaternary structure, heterotetramer of two alpha chains (FadB) and two beta chains (FadA).

It is found in the cytoplasm. It catalyses the reaction an acyl-CoA + acetyl-CoA = a 3-oxoacyl-CoA + CoA. The protein operates within lipid metabolism; fatty acid beta-oxidation. In terms of biological role, catalyzes the final step of fatty acid oxidation in which acetyl-CoA is released and the CoA ester of a fatty acid two carbons shorter is formed. This Shewanella frigidimarina (strain NCIMB 400) protein is 3-ketoacyl-CoA thiolase.